A 330-amino-acid chain; its full sequence is MGVVSLPGIGPLPLYGFQRPGMLLFGLVPLALLALYLVVQARRRRRLHRYTDAPVAQSPWRHLPIAVSLLSLVLLTIALATPTHDMRIPRNRAVIMLVIDMSQSMRATDVEPNRLKAAEQAASQFASQLTPGINLGLVGFAGTPYLLVPPTPQHQATIDALKKLDFADSTATGEAIFTALHAISATAVAGGDTPPPARIVLLSDGGENKPSNPSDPHDGVYTAARLAKDEGVPISTITFGTKGGEIEMDGQKVAVPVSTDQMKMVAKLSGGQSYTATNLGELQKSYNAIENEIGYRTVPGPGSAGWLRLGVLTALIATALALLINRRLPT.

The next 2 membrane-spanning stretches (helical) occupy residues 21-41 and 63-83; these read GMLLFGLVPLALLALYLVVQA and LPIAVSLLSLVLLTIALATPT. The region spanning 94-289 is the VWFA domain; it reads VIMLVIDMSQ…GELQKSYNAI (196 aa). A helical transmembrane segment spans residues 304-324; the sequence is AGWLRLGVLTALIATALALLI.

It belongs to the UPF0353 family.

The protein resides in the cell membrane. This Mycolicibacterium paratuberculosis (strain ATCC BAA-968 / K-10) (Mycobacterium paratuberculosis) protein is UPF0353 protein MAP_3434.